We begin with the raw amino-acid sequence, 209 residues long: Small ribosomal subunit protein mS23 (209 aa).

It belongs to the mitochondrion-specific ribosomal protein mS23 family. Component of the mitochondrial small ribosomal subunit.

The protein localises to the mitochondrion. This Sclerotinia sclerotiorum (strain ATCC 18683 / 1980 / Ss-1) (White mold) protein is Small ribosomal subunit protein mS23 (rsm25).